We begin with the raw amino-acid sequence, 611 residues long: Putative type II restriction enzyme HgiDII (611 aa).

The span at 355-364 (YPSNPKKEEV) shows a compositional bias: basic and acidic residues. The disordered stretch occupies residues 355–434 (YPSNPKKEEV…PEPSPPPKQE (80 aa)). Residues 381-409 (TNASSDSSTATENASSDSSTATENASSET) are compositionally biased toward low complexity. 2 tandem repeats follow at residues 382 to 392 (NASSDSSTATE) and 393 to 403 (NASSDSSTATE). Residues 382 to 403 (NASSDSSTATENASSDSSTATE) form a 2.5 X 11 AA tandem repeats region. The stretch at 404 to 409 (NASSET) is one 3; truncated repeat. A compositionally biased stretch (acidic residues) spans 410–425 (NDGEVEDNSFFDDDIP).

It carries out the reaction Endonucleolytic cleavage of DNA to give specific double-stranded fragments with terminal 5'-phosphates.. In terms of biological role, according to REBASE this is a P subtype restriction enzyme that recognizes the double-stranded sequence 5'-GTCGAC-3' and cleaves after G-1. No restriction activity was detected upon overexpressing this protein in E.coli. The sequence is that of Putative type II restriction enzyme HgiDII from Herpetosiphon aurantiacus (Herpetosiphon giganteus).